Reading from the N-terminus, the 474-residue chain is PRAME family member 10 (474 aa).

Residues 97–124 (RWKLQVLDLRDVDENFWTIWSGARVLSC) form an LRR 1; degenerate repeat. An LRR 2; degenerate repeat occupies 179–203 (HLCCSKVQNYSMPTSSFRNLLERIY). Residues 204 to 230 (PDSIQELEVWKKCSLNKTGKFAPYLSQ) form an LRR 3; degenerate repeat. Residues 231–265 (MSNLRELFLAFGYERELYVSVQWPCIPDLDSPFLC) form an LRR 4; degenerate repeat. 5 LRR repeats span residues 266-291 (LYYP…LRYL), 292-323 (KNPL…SQLK), 324-342 (ELRL…PLGV), 348-375 (AATL…ALSH), and 376-400 (CSQL…LLRH).

Belongs to the PRAME family.

This Homo sapiens (Human) protein is PRAME family member 10.